A 431-amino-acid chain; its full sequence is GTPase Obg (431 aa).

Residues M1–L158 enclose the Obg domain. Residues K118–E144 form a disordered region. The 172-residue stretch at A159 to E330 folds into the OBG-type G domain. GTP is bound by residues G165–S172, F190–K194, D212–G215, N282–D285, and S311–F313. Residues S172 and T192 each contribute to the Mg(2+) site. In terms of domain architecture, OCT spans K353–E431.

The protein belongs to the TRAFAC class OBG-HflX-like GTPase superfamily. OBG GTPase family. Monomer. Requires Mg(2+) as cofactor.

It is found in the cytoplasm. In terms of biological role, an essential GTPase which binds GTP, GDP and possibly (p)ppGpp with moderate affinity, with high nucleotide exchange rates and a fairly low GTP hydrolysis rate. Plays a role in control of the cell cycle, stress response, ribosome biogenesis and in those bacteria that undergo differentiation, in morphogenesis control. In Staphylococcus saprophyticus subsp. saprophyticus (strain ATCC 15305 / DSM 20229 / NCIMB 8711 / NCTC 7292 / S-41), this protein is GTPase Obg.